Consider the following 741-residue polypeptide: Catalase-peroxidase (741 aa).

The signal sequence occupies residues 1–23 (MLKKIVTALGMSGMLLASSNAIA). The segment at residues 102–223 (WHDAGTYRIY…YAATQMGLIY (122 aa)) is a cross-link (tryptophyl-tyrosyl-methioninium (Trp-Tyr) (with M-249)). H103 serves as the catalytic Proton acceptor. Positions 223–249 (YVNPEGPDGKPDIKGAASEIRQAFRAM) form a cross-link, tryptophyl-tyrosyl-methioninium (Tyr-Met) (with W-102). H264 is a heme b binding site.

It belongs to the peroxidase family. Peroxidase/catalase subfamily. In terms of assembly, homodimer or homotetramer. The cofactor is heme b. In terms of processing, formation of the three residue Trp-Tyr-Met cross-link is important for the catalase, but not the peroxidase activity of the enzyme.

The catalysed reaction is H2O2 + AH2 = A + 2 H2O. The enzyme catalyses 2 H2O2 = O2 + 2 H2O. In terms of biological role, bifunctional enzyme with both catalase and broad-spectrum peroxidase activity. This Francisella tularensis subsp. tularensis (strain FSC 198) protein is Catalase-peroxidase.